A 248-amino-acid chain; its full sequence is Probable transcriptional regulatory protein OCAR_7305/OCA5_c08120 (248 aa).

The protein belongs to the TACO1 family.

The protein resides in the cytoplasm. The sequence is that of Probable transcriptional regulatory protein OCAR_7305/OCA5_c08120 from Afipia carboxidovorans (strain ATCC 49405 / DSM 1227 / KCTC 32145 / OM5) (Oligotropha carboxidovorans).